The sequence spans 984 residues: Ephrin type-A receptor 3 (984 aa).

Positions 1–20 (MDCHLSILILFGCCVLSCSR) are cleaved as a signal peptide. Topologically, residues 21-541 (ELSPQPSNEV…SFSISGENSH (521 aa)) are extracellular. The 179-residue stretch at 29–207 (EVNLLDSKTI…YFKKCPFTVK (179 aa)) folds into the Eph LBD domain. 5 N-linked (GlcNAc...) asparagine glycosylation sites follow: Asn-232, Asn-337, Asn-391, Asn-404, and Asn-493. Fibronectin type-III domains follow at residues 325–435 (PPSA…TNQA) and 436–532 (APSP…SPDS). A helical membrane pass occupies residues 542–565 (VVMIAISAAVAIIVLTVVTYVLVG). The Cytoplasmic portion of the chain corresponds to 566–984 (RFCGYHKSKH…TQSKNGPVPV (419 aa)). Tyr-597 and Tyr-603 each carry phosphotyrosine; by autocatalysis. One can recognise a Protein kinase domain in the interval 622–883 (IAIDKVVGAG…QIVSILDKLI (262 aa)). Residues 629 to 634 (GAGEFG), Lys-654, and 701 to 707 (EYMENGS) contribute to the ATP site. The residue at position 702 (Tyr-702) is a Phosphotyrosine; by autocatalysis. Residue Asp-747 is the Proton acceptor of the active site. 751-752 (RN) provides a ligand contact to ATP. Tyr-780 is modified (phosphotyrosine; by autocatalysis). Residues 912–976 (ATFHTTGDWL…ISSIKALETQ (65 aa)) form the SAM domain. Position 938 is a phosphotyrosine (Tyr-938). The short motif at 982-984 (VPV) is the PDZ-binding element.

Belongs to the protein kinase superfamily. Tyr protein kinase family. Ephrin receptor subfamily. In terms of assembly, heterotetramer upon binding of the ligand. The heterotetramer is composed of an ephrin dimer and a receptor dimer. Oligomerization is probably required to induce biological responses. Forms a ternary EFNA5-EPHA3-ADAM10 complex mediating EFNA5 extracellular domain shedding by ADAM10 which regulates the EFNA5-EPHA3 complex internalization and function. Interacts (phosphorylated) with PTPN1; dephosphorylates EPHA3 and may regulate its trafficking and function. Interacts (phosphorylated) with CRK; mediates EFNA5-EPHA3 signaling through RHOA GTPase activation. Interacts with NCK1 (via SH2 domain); mediates EFNA5-EPHA3 signaling. Post-translationally, autophosphorylates upon activation by EFNA5. Phosphorylation on Tyr-603 mediates interaction with NCK1. Dephosphorylated by PTPN1. Most abundant in the heart, brain and lung.

It localises to the cell membrane. The catalysed reaction is L-tyrosyl-[protein] + ATP = O-phospho-L-tyrosyl-[protein] + ADP + H(+). Functionally, receptor tyrosine kinase which binds promiscuously membrane-bound ephrin family ligands residing on adjacent cells, leading to contact-dependent bidirectional signaling into neighboring cells. The signaling pathway downstream of the receptor is referred to as forward signaling while the signaling pathway downstream of the ephrin ligand is referred to as reverse signaling. Highly promiscuous for ephrin-A ligands it binds preferentially EFNA5. Upon activation by EFNA5 regulates cell-cell adhesion, cytoskeletal organization and cell migration. Plays a role in cardiac cells migration and differentiation and regulates the formation of the atrioventricular canal and septum during development probably through activation by EFNA1. Involved in the retinotectal mapping of neurons. May also control the segregation but not the guidance of motor and sensory axons during neuromuscular circuit development. The chain is Ephrin type-A receptor 3 (Epha3) from Rattus norvegicus (Rat).